The sequence spans 622 residues: Low affinity potassium transport system protein Kup (622 aa).

Transmembrane regions (helical) follow at residues 9 to 29 (LPAITLAAIGVVYGDIGTSPL), 49 to 69 (VFGFLSLIFWLLIFVVSIKYL), 103 to 123 (VIMGLIGGSFFYGEVVITPAI), 137 to 157 (PQLDTWIVPLSIVVLTLLFMI), 165 to 185 (VGKLFAPIMLTWFLILAVLGL), 213 to 233 (VSFIALGAVVLSITGVEALYA), 247 to 267 (WFTVVLPSLVLNYFGQGALLL), 276 to 296 (PFFLLAPDWALIPLLILAALA), 337 to 357 (IYIPFVNWLLYFAVVVVIVSF), 363 to 383 (LAAAYGIAVTGTMVLTSILST), 396 to 416 (LVALILVAFLCVDIPLFSANL), and 419 to 439 (LLSGGWLPLSLGLIMFTIMTT).

This sequence belongs to the HAK/KUP transporter (TC 2.A.72) family.

The protein resides in the cell inner membrane. The enzyme catalyses K(+)(in) + H(+)(in) = K(+)(out) + H(+)(out). Functionally, responsible for the low-affinity transport of potassium into the cell. Likely operates as a K(+):H(+) symporter. The protein is Low affinity potassium transport system protein Kup of Salmonella arizonae (strain ATCC BAA-731 / CDC346-86 / RSK2980).